The following is a 642-amino-acid chain: Threonine--tRNA ligase (642 aa).

The catalytic stretch occupies residues 239–530; it reads DHRKLGKELN…LTEHYAGAFP (292 aa). Positions 331, 382, and 507 each coordinate Zn(2+).

This sequence belongs to the class-II aminoacyl-tRNA synthetase family. Homodimer. It depends on Zn(2+) as a cofactor.

The protein resides in the cytoplasm. The catalysed reaction is tRNA(Thr) + L-threonine + ATP = L-threonyl-tRNA(Thr) + AMP + diphosphate + H(+). Functionally, catalyzes the attachment of threonine to tRNA(Thr) in a two-step reaction: L-threonine is first activated by ATP to form Thr-AMP and then transferred to the acceptor end of tRNA(Thr). Also edits incorrectly charged L-seryl-tRNA(Thr). This Lawsonia intracellularis (strain PHE/MN1-00) protein is Threonine--tRNA ligase.